Consider the following 299-residue polypeptide: Protease HtpX homolog (299 aa).

Transmembrane regions (helical) follow at residues 14–34 (IVLLIVFFMLLAAIGAAVGYL) and 39–59 (LVGGMAIALIIGFIYAFSMIF). H143 contributes to the Zn(2+) binding site. E144 is a catalytic residue. A Zn(2+)-binding site is contributed by H147. The next 2 membrane-spanning stretches (helical) occupy residues 158–178 (IAVALASAVTLISSIGGRMMW) and 198–218 (IILLIFSLLAIILAPLAASLV). A Zn(2+)-binding site is contributed by E227.

Belongs to the peptidase M48B family. It depends on Zn(2+) as a cofactor.

The protein localises to the cell membrane. This Streptococcus mutans serotype c (strain ATCC 700610 / UA159) protein is Protease HtpX homolog.